A 481-amino-acid chain; its full sequence is Extracellular exo-alpha-(1-&gt;5)-L-arabinofuranosidase (481 aa).

The N-terminal stretch at 1-27 is a signal peptide; sequence MRRLTVRLFTAVLAALALLTMGTPAHA. Residues 37-336 are catalytic; the sequence is FTNPLAEKRA…KVYWNADGTP (300 aa). Catalysis depends on aspartate 47, which acts as the Proton acceptor. Residue asparagine 186 coordinates substrate. The active-site Proton donor is glutamate 223. Substrate contacts are provided by residues histidine 287, arginine 321, 363–366, aspartate 379, 457–460, and aspartate 475; these read HWDF and HYEN. The segment at 349–479 is ABD; sequence VRFSSYNYPD…ALDRQDATFY (131 aa).

This sequence belongs to the glycosyl hydrolase 43 family.

The protein resides in the secreted. The catalysed reaction is Hydrolysis of terminal non-reducing alpha-L-arabinofuranoside residues in alpha-L-arabinosides.. The protein operates within glycan metabolism; L-arabinan degradation. Involved in the degradation of arabinan and is a key enzyme in the complete degradation of the plant cell wall. Catalyzes only the cleavage of terminal alpha-(1-&gt;5) arabinofuranosyl bonds of arabinan present in the arabinofuranosyl polysaccharides or oligosaccharides. It cannot act on other arabinose-containing polysaccharides and arabinoxylo-oligosaccharides. The polypeptide is Extracellular exo-alpha-(1-&gt;5)-L-arabinofuranosidase (Streptomyces avermitilis (strain ATCC 31267 / DSM 46492 / JCM 5070 / NBRC 14893 / NCIMB 12804 / NRRL 8165 / MA-4680)).